A 114-amino-acid polypeptide reads, in one-letter code: FK506-binding protein 1 (114 aa).

Residues 26 to 114 (GDLVTIHYTG…IFEVELLKVN (89 aa)) enclose the PPIase FKBP-type domain.

The protein belongs to the FKBP-type PPIase family. FKBP1 subfamily.

It localises to the cytoplasm. The enzyme catalyses [protein]-peptidylproline (omega=180) = [protein]-peptidylproline (omega=0). With respect to regulation, inhibited by both FK506 and rapamycin. Its function is as follows. PPIases accelerate the folding of proteins. It catalyzes the cis-trans isomerization of proline imidic peptide bonds in oligopeptides. The sequence is that of FK506-binding protein 1 (FPR1) from Eremothecium gossypii (strain ATCC 10895 / CBS 109.51 / FGSC 9923 / NRRL Y-1056) (Yeast).